A 117-amino-acid chain; its full sequence is Large ribosomal subunit protein uL18 (117 aa).

This sequence belongs to the universal ribosomal protein uL18 family. In terms of assembly, part of the 50S ribosomal subunit; part of the 5S rRNA/L5/L18/L25 subcomplex. Contacts the 5S and 23S rRNAs.

Its function is as follows. This is one of the proteins that bind and probably mediate the attachment of the 5S RNA into the large ribosomal subunit, where it forms part of the central protuberance. The protein is Large ribosomal subunit protein uL18 of Aliivibrio salmonicida (strain LFI1238) (Vibrio salmonicida (strain LFI1238)).